The following is a 212-amino-acid chain: 3-isopropylmalate dehydratase small subunit (212 aa).

It belongs to the LeuD family. LeuD type 1 subfamily. In terms of assembly, heterodimer of LeuC and LeuD.

The enzyme catalyses (2R,3S)-3-isopropylmalate = (2S)-2-isopropylmalate. Its pathway is amino-acid biosynthesis; L-leucine biosynthesis; L-leucine from 3-methyl-2-oxobutanoate: step 2/4. Catalyzes the isomerization between 2-isopropylmalate and 3-isopropylmalate, via the formation of 2-isopropylmaleate. In Nitrosomonas eutropha (strain DSM 101675 / C91 / Nm57), this protein is 3-isopropylmalate dehydratase small subunit.